The chain runs to 75 residues: UPF0352 protein VIBHAR_03027 (75 aa).

This sequence belongs to the UPF0352 family.

The chain is UPF0352 protein VIBHAR_03027 from Vibrio campbellii (strain ATCC BAA-1116).